The following is a 427-amino-acid chain: Serine--tRNA ligase (427 aa).

230–232 (TSE) contributes to the L-serine binding site. ATP is bound by residues 260–262 (RRE) and Val276. Glu283 is a binding site for L-serine. 347-350 (ELTS) serves as a coordination point for ATP. Position 387 (Thr387) interacts with L-serine.

It belongs to the class-II aminoacyl-tRNA synthetase family. Type-1 seryl-tRNA synthetase subfamily. Homodimer. The tRNA molecule binds across the dimer.

It localises to the cytoplasm. The enzyme catalyses tRNA(Ser) + L-serine + ATP = L-seryl-tRNA(Ser) + AMP + diphosphate + H(+). It catalyses the reaction tRNA(Sec) + L-serine + ATP = L-seryl-tRNA(Sec) + AMP + diphosphate + H(+). Its pathway is aminoacyl-tRNA biosynthesis; selenocysteinyl-tRNA(Sec) biosynthesis; L-seryl-tRNA(Sec) from L-serine and tRNA(Sec): step 1/1. Its function is as follows. Catalyzes the attachment of serine to tRNA(Ser). Is also able to aminoacylate tRNA(Sec) with serine, to form the misacylated tRNA L-seryl-tRNA(Sec), which will be further converted into selenocysteinyl-tRNA(Sec). The protein is Serine--tRNA ligase of Micrococcus luteus (strain ATCC 4698 / DSM 20030 / JCM 1464 / CCM 169 / CCUG 5858 / IAM 1056 / NBRC 3333 / NCIMB 9278 / NCTC 2665 / VKM Ac-2230) (Micrococcus lysodeikticus).